The chain runs to 921 residues: MNTSQTAAGNRITFTSQPLPNGTISIAGNPGAVISTAQLPNTTTIKTIQAGIGGQHQGLQQVHHVQQQQQSQQQQQQQQQTQSAGQPLLNSMLPAGVVVGMRQQAPSQQQQKNVPTNPLSRVVINSHMAGVRPQSPSITLSTLNTGQTPALLVKTDNGFQLLRVGTTTGPPTVTQTITNTSNNSNTTSTTNHPTTTQIRLQTVPAAASMTNTTATSNIIVNSVASSGYANSSQPPHLTQLNAQAPQLPQITQIQTIPAQQSQQQQVNNVSSAGGTATAVSSTTAATTTQQGNTKEKCRKFLANLIELSTREPKPVEKNVRTLIQELVNANVEPEEFCDRLERLLNASPQPCLIGFLKKSLPLLRQALYTKELVIEGIKPPPQHVLGLAGLSQQLPKIQAQIRPIGPSQTTTIGQTQVRMITPNALGTPRPTIGHTTISKQPPNIRLPTAPRLVNTGGIRTQIPSLQVPGQANIVQIRGPQHAQLQRTGSVQIRATTRPPNSVPTANKLTAVKVGQTQIKAITPSLHPPSLAAISGGPPPTPTLSVLSTLNSASTTTLPIPSLPTVHLPPEALRAREQMQNSLNHNSNHFDAKLVEIKAPSLHPPHMERINASLTPIGAKTMARPPPAINKAIGKKKRDAMEMDAKLNTSSGGAASAANSFFQQSSMSSMYGDDDINDVAAMGGVNLAEESQRILGCTENIGTQIRSCKDEVFLNLPSLQARIRAITSEAGLDEPSQDVAVLISHACQERLKNIVEKLAVIAEHRIDVIKLDPRYEPAKDVRGQIKFLEELDKAEQKRHEELEREMLLRAAKSRSRVEDPEQAKMKARAKEMQRAEMEELRQRDANLTALQAIGPRKKLKLDGETVSSGAGSSGGGVLSSSGSAPTTLRPRIKRVNLRDMLFYMEQEREFCRSSMLFKTYLK.

2 disordered regions span residues 66–85 (QQQQ…QSAG) and 166–194 (TTTG…NHPT). The 97-residue stretch at 290 to 386 (QGNTKEKCRK…IKPPPQHVLG (97 aa)) folds into the TAFH domain. Disordered regions lie at residues 423-442 (NALG…KQPP) and 860-886 (LDGE…APTT).

Belongs to the TAF4 family. As to quaternary structure, belongs to the TFIID complex which is composed of TATA binding protein (Tbp) and a number of TBP-associated factors (TAFs). Interacts with TFIIA-L when in complex with Tbp. Interacts with Taf1, Taf5, Taf11 and Taf12.

It localises to the nucleus. Its function is as follows. TFIID is a multimeric protein complex that plays a central role in mediating promoter responses to various activators and repressors. May function as a coactivator by serving as a site of protein-protein contact between activators like Sp1 (or btd) and TFIID complex. The polypeptide is Transcription initiation factor TFIID subunit 4 (Taf4) (Drosophila melanogaster (Fruit fly)).